The primary structure comprises 340 residues: Phenylalanine--tRNA ligase alpha subunit (340 aa).

Glutamate 255 contacts Mg(2+).

The protein belongs to the class-II aminoacyl-tRNA synthetase family. Phe-tRNA synthetase alpha subunit type 1 subfamily. In terms of assembly, tetramer of two alpha and two beta subunits. The cofactor is Mg(2+).

Its subcellular location is the cytoplasm. The enzyme catalyses tRNA(Phe) + L-phenylalanine + ATP = L-phenylalanyl-tRNA(Phe) + AMP + diphosphate + H(+). This is Phenylalanine--tRNA ligase alpha subunit from Desulforamulus reducens (strain ATCC BAA-1160 / DSM 100696 / MI-1) (Desulfotomaculum reducens).